The primary structure comprises 244 residues: 14-3-3 protein beta/alpha-1 (244 aa).

Met1 carries the N-acetylmethionine modification.

This sequence belongs to the 14-3-3 family. As to quaternary structure, homodimer, and heterodimer with other family members. In terms of tissue distribution, expressed in brain, gill, heart, intestine, kidney, liver, ovary, skin, spleen and testis.

It is found in the cytoplasm. Adapter protein implicated in the regulation of a large spectrum of both general and specialized signaling pathways. Binds to a large number of partners, usually by recognition of a phosphoserine or phosphothreonine motif. Binding generally results in the modulation of the activity of the binding partner. The polypeptide is 14-3-3 protein beta/alpha-1 (Oncorhynchus mykiss (Rainbow trout)).